Here is a 137-residue protein sequence, read N- to C-terminus: Large ribosomal subunit protein uL16 (137 aa).

This sequence belongs to the universal ribosomal protein uL16 family. As to quaternary structure, part of the 50S ribosomal subunit.

Binds 23S rRNA and is also seen to make contacts with the A and possibly P site tRNAs. The sequence is that of Large ribosomal subunit protein uL16 from Rhizobium rhizogenes (strain K84 / ATCC BAA-868) (Agrobacterium radiobacter).